The primary structure comprises 47 residues: MASFTLDLLAQLPEAYQAFSPLIDILPLIPVFFLLLAFVWQASVGFR.

A propeptide spanning residues Met-1–Ala-10 is cleaved from the precursor. A helical transmembrane segment spans residues Phe-19–Val-39.

This sequence belongs to the PsbK family. PSII is composed of 1 copy each of membrane proteins PsbA, PsbB, PsbC, PsbD, PsbE, PsbF, PsbH, PsbI, PsbJ, PsbK, PsbL, PsbM, PsbT, PsbX, PsbY, PsbZ, Psb30/Ycf12, peripheral proteins PsbO, CyanoQ (PsbQ), PsbU, PsbV and a large number of cofactors. It forms dimeric complexes.

It is found in the cellular thylakoid membrane. Its function is as follows. One of the components of the core complex of photosystem II (PSII). PSII is a light-driven water:plastoquinone oxidoreductase that uses light energy to abstract electrons from H(2)O, generating O(2) and a proton gradient subsequently used for ATP formation. It consists of a core antenna complex that captures photons, and an electron transfer chain that converts photonic excitation into a charge separation. The protein is Photosystem II reaction center protein K of Parasynechococcus marenigrum (strain WH8102).